Consider the following 181-residue polypeptide: Large ribosomal subunit protein uL5 (181 aa).

The protein belongs to the universal ribosomal protein uL5 family. As to quaternary structure, part of the 50S ribosomal subunit; part of the 5S rRNA/L5/L18/L25 subcomplex. Contacts the 5S rRNA and the P site tRNA. Forms a bridge to the 30S subunit in the 70S ribosome.

This is one of the proteins that bind and probably mediate the attachment of the 5S RNA into the large ribosomal subunit, where it forms part of the central protuberance. In the 70S ribosome it contacts protein S13 of the 30S subunit (bridge B1b), connecting the 2 subunits; this bridge is implicated in subunit movement. Contacts the P site tRNA; the 5S rRNA and some of its associated proteins might help stabilize positioning of ribosome-bound tRNAs. The sequence is that of Large ribosomal subunit protein uL5 from Thermosipho africanus (strain TCF52B).